Consider the following 335-residue polypeptide: Methionine import ATP-binding protein MetN 2 (335 aa).

The region spanning 2–242 (IEFHDVHKTY…PQHPTTRRFV (241 aa)) is the ABC transporter domain. 38–45 (GHSGAGKS) serves as a coordination point for ATP.

This sequence belongs to the ABC transporter superfamily. Methionine importer (TC 3.A.1.24) family. In terms of assembly, the complex is composed of two ATP-binding proteins (MetN), two transmembrane proteins (MetI) and a solute-binding protein (MetQ).

The protein localises to the cell inner membrane. It catalyses the reaction L-methionine(out) + ATP + H2O = L-methionine(in) + ADP + phosphate + H(+). The catalysed reaction is D-methionine(out) + ATP + H2O = D-methionine(in) + ADP + phosphate + H(+). Part of the ABC transporter complex MetNIQ involved in methionine import. Responsible for energy coupling to the transport system. This Pseudomonas aeruginosa (strain UCBPP-PA14) protein is Methionine import ATP-binding protein MetN 2.